We begin with the raw amino-acid sequence, 417 residues long: Imidazolonepropionase (417 aa).

Positions 80 and 82 each coordinate Fe(3+). 2 residues coordinate Zn(2+): His80 and His82. 3 residues coordinate 4-imidazolone-5-propanoate: Arg89, Tyr152, and His187. Tyr152 serves as a coordination point for N-formimidoyl-L-glutamate. His252 lines the Fe(3+) pocket. His252 serves as a coordination point for Zn(2+). Glu255 contacts 4-imidazolone-5-propanoate. Asp326 contacts Fe(3+). Asp326 is a binding site for Zn(2+). N-formimidoyl-L-glutamate-binding residues include Asn328 and Gly330. Residue Ser331 coordinates 4-imidazolone-5-propanoate.

The protein belongs to the metallo-dependent hydrolases superfamily. HutI family. Requires Zn(2+) as cofactor. The cofactor is Fe(3+).

It is found in the cytoplasm. The enzyme catalyses 4-imidazolone-5-propanoate + H2O = N-formimidoyl-L-glutamate. It functions in the pathway amino-acid degradation; L-histidine degradation into L-glutamate; N-formimidoyl-L-glutamate from L-histidine: step 3/3. In terms of biological role, catalyzes the hydrolytic cleavage of the carbon-nitrogen bond in imidazolone-5-propanoate to yield N-formimidoyl-L-glutamate. It is the third step in the universal histidine degradation pathway. The chain is Imidazolonepropionase from Bacteroides fragilis (strain ATCC 25285 / DSM 2151 / CCUG 4856 / JCM 11019 / LMG 10263 / NCTC 9343 / Onslow / VPI 2553 / EN-2).